Reading from the N-terminus, the 307-residue chain is UPF0276 protein PM0211 (307 aa).

The protein belongs to the UPF0276 family.

This is UPF0276 protein PM0211 from Pasteurella multocida (strain Pm70).